We begin with the raw amino-acid sequence, 417 residues long: Phosphoglycerate kinase 1 (417 aa).

Ser-2 is modified (N-acetylserine). Phosphoserine occurs at positions 2 and 4. The residue at position 6 (Lys-6) is an N6-succinyllysine. At Lys-11 the chain carries N6-acetyllysine. Residues Val-23, Asp-24, Phe-25, Asn-26, Gln-38, and Arg-39 each coordinate (2R)-3-phosphoglycerate. The tract at residues 38 to 43 (QRIKAA) is mitochondrial targeting region exposed following cis-trans isomerization by PIN1 and recognized by the TOM complex for mitochondrial translocation of the protein. Lys-48 is subject to N6-acetyllysine; alternate. Lys-48 carries the post-translational modification N6-succinyllysine; alternate. Positions 62, 63, 65, and 66 each coordinate (2R)-3-phosphoglycerate. Lys-75 is subject to N6-acetyllysine. The residue at position 76 (Tyr-76) is a Phosphotyrosine. Lys-86 and Lys-91 each carry N6-acetyllysine. Lys-97 carries the N6-acetyllysine; alternate modification. Residue Lys-97 is modified to N6-(2-hydroxyisobutyryl)lysine; alternate. Leu-122 and Arg-123 together coordinate (2R)-3-phosphoglycerate. Lys-131 is modified (N6-acetyllysine; alternate). At Lys-131 the chain carries N6-malonyllysine; alternate. Lys-146 is subject to N6-acetyllysine. Residues His-170 and Arg-171 each coordinate (2R)-3-phosphoglycerate. At Lys-191 the chain carries N6-succinyllysine. Tyr-196 carries the post-translational modification Phosphotyrosine. An N6-acetyllysine modification is found at Lys-199. Ser-203 carries the phosphoserine modification. Gly-214 lines the ADP pocket. CDP is bound at residue Gly-214. Positions 215 and 216 each coordinate AMP. Position 215 (Ala-215) interacts with ATP. Ala-215 contacts Mg(2+). Lys-216 carries the post-translational modification N6-(2-hydroxyisobutyryl)lysine. Positions 218 and 219 each coordinate Mg(2+). Residue Asp-219 participates in CDP binding. Lys-220 provides a ligand contact to AMP. Lys-220 is a binding site for ATP. Position 220 is an N6-(2-hydroxyisobutyryl)lysine (Lys-220). Gly-238 is an ADP binding site. CDP is bound at residue Gly-238. Gly-239 provides a ligand contact to AMP. Position 239 (Gly-239) interacts with ATP. N6-acetyllysine is present on residues Lys-267 and Lys-291. Gly-313 lines the AMP pocket. Gly-313 contacts ATP. Lys-323 is subject to N6-(2-hydroxyisobutyryl)lysine. The CDP site is built by Gly-338, Val-340, and Phe-343. Position 343 (Phe-343) interacts with ADP. Glu-344 contributes to the AMP binding site. ATP is bound at residue Glu-344. Ser-354 is modified (phosphoserine). Position 361 is an N6-acetyllysine (Lys-361). Positions 375 and 376 each coordinate ATP. Asp-375 is a Mg(2+) binding site.

Belongs to the phosphoglycerate kinase family. In terms of assembly, monomer. Interacts with kinase MAPK1/ERK2; the interaction is direct, occurs under hypoxic conditions, and promotes its interaction with PIN1. Interacts with peptidyl-prolyl cis-trans isomerase PIN1; the interaction is direct, occurs under hypoxic conditions, and targets the protein to the mitochondrion by promoting interactions with the TOM complex. Interacts with mitochondrial circRNA mcPGK1 (via its 2nd stem-loop); the interaction is direct and targets the protein to the mitochondrion by promoting interactions with the TOM complex. Interacts with pyruvate dehydrogenase kinase PDK1; the interaction is direct, occurs under hypoxic conditions and leads to PDK1-mediated inhibition of pyruvate dehydrogenase complex activity. It depends on Mg(2+) as a cofactor. In terms of processing, phosphorylated at Ser-203 by MAPK1/ERK2 under hypoxic conditions, which promotes its mitochondrial targeting.

Its subcellular location is the cytoplasm. It localises to the cytosol. It is found in the mitochondrion matrix. It catalyses the reaction (2R)-3-phosphoglycerate + ATP = (2R)-3-phospho-glyceroyl phosphate + ADP. It carries out the reaction L-seryl-[protein] + ATP = O-phospho-L-seryl-[protein] + ADP + H(+). The protein operates within carbohydrate degradation; glycolysis; pyruvate from D-glyceraldehyde 3-phosphate: step 2/5. Its function is as follows. Catalyzes one of the two ATP producing reactions in the glycolytic pathway via the reversible conversion of 1,3-diphosphoglycerate to 3-phosphoglycerate. Both L- and D- forms of purine and pyrimidine nucleotides can be used as substrates, but the activity is much lower on pyrimidines. In addition to its role as a glycolytic enzyme, it seems that PGK-1 acts as a polymerase alpha cofactor protein (primer recognition protein). Acts as a protein kinase when localized to the mitochondrion where it phosphorylates pyruvate dehydrogenase kinase PDK1 to inhibit pyruvate dehydrogenase complex activity and suppress the formation of acetyl-coenzyme A from pyruvate, and consequently inhibit oxidative phosphorylation and promote glycolysis. May play a role in sperm motility. The protein is Phosphoglycerate kinase 1 (Pgk1) of Rattus norvegicus (Rat).